A 559-amino-acid polypeptide reads, in one-letter code: Inositol-3-phosphate synthase 1 (559 aa).

21 residues coordinate NAD(+): G67, G68, N69, N70, D141, S177, V178, Q188, R191, T228, A229, N230, T231, G278, S279, D303, S306, N337, N338, D339, and K352. A Phosphoserine modification is found at S279. S357 carries the phosphoserine modification. G390, D391, D419, and S420 together coordinate NAD(+).

It belongs to the myo-inositol 1-phosphate synthase family. Requires NAD(+) as cofactor.

The protein localises to the cytoplasm. The enzyme catalyses D-glucose 6-phosphate = 1D-myo-inositol 3-phosphate. It participates in polyol metabolism; myo-inositol biosynthesis; myo-inositol from D-glucose 6-phosphate: step 1/2. Key enzyme in myo-inositol biosynthesis pathway that catalyzes the conversion of glucose 6-phosphate to 1-myo-inositol 1-phosphate in a NAD-dependent manner. Rate-limiting enzyme in the synthesis of all inositol-containing compounds. This Macaca fascicularis (Crab-eating macaque) protein is Inositol-3-phosphate synthase 1 (ISYNA1).